Here is a 307-residue protein sequence, read N- to C-terminus: Geranylgeranyl diphosphate synthase (307 aa).

The isopentenyl diphosphate site is built by K52, R55, and H86. Mg(2+)-binding residues include D93 and D99. R104 lines the (2E,6E)-farnesyl diphosphate pocket. Position 105 (R105) interacts with isopentenyl diphosphate. (2E,6E)-farnesyl diphosphate-binding residues include K188, T189, and Q226.

Belongs to the FPP/GGPP synthase family. Mg(2+) serves as cofactor.

The catalysed reaction is isopentenyl diphosphate + (2E,6E)-farnesyl diphosphate = (2E,6E,10E)-geranylgeranyl diphosphate + diphosphate. Its pathway is isoprenoid biosynthesis; geranylgeranyl diphosphate biosynthesis; geranylgeranyl diphosphate from farnesyl diphosphate and isopentenyl diphosphate: step 1/1. Functionally, catalyzes the condensation of farnesyl diphosphate (FPP) and isopentenyl diphosphate (IPP) to yield geranylgeranyl diphosphate (GGPP) needed for biosynthesis of carotenoids and diterpenes. This chain is Geranylgeranyl diphosphate synthase (crtE), found in Pseudescherichia vulneris (Escherichia vulneris).